A 215-amino-acid polypeptide reads, in one-letter code: Probable phosphoglycerate mutase GpmB (215 aa).

Substrate-binding positions include 8 to 15 (RHGETQWN), 21 to 22 (QG), R58, R60, 82 to 85 (ELNM), 104 to 105 (RR), and 151 to 152 (GI). H9 functions as the Tele-phosphohistidine intermediate in the catalytic mechanism. Residue E82 is the Proton donor/acceptor of the active site.

The protein belongs to the phosphoglycerate mutase family. GpmB subfamily.

It carries out the reaction (2R)-2-phosphoglycerate = (2R)-3-phosphoglycerate. It functions in the pathway carbohydrate degradation; glycolysis; pyruvate from D-glyceraldehyde 3-phosphate: step 3/5. The protein is Probable phosphoglycerate mutase GpmB of Escherichia fergusonii (strain ATCC 35469 / DSM 13698 / CCUG 18766 / IAM 14443 / JCM 21226 / LMG 7866 / NBRC 102419 / NCTC 12128 / CDC 0568-73).